We begin with the raw amino-acid sequence, 338 residues long: 1-aminocyclopropane-1-carboxylate deaminase (338 aa).

Position 51 is an N6-(pyridoxal phosphate)lysine (Lys-51). Catalysis depends on Ser-78, which acts as the Nucleophile.

The protein belongs to the ACC deaminase/D-cysteine desulfhydrase family. In terms of assembly, homotrimer. Pyridoxal 5'-phosphate serves as cofactor.

The enzyme catalyses 1-aminocyclopropane-1-carboxylate + H2O = 2-oxobutanoate + NH4(+). In terms of biological role, catalyzes a cyclopropane ring-opening reaction, the irreversible conversion of 1-aminocyclopropane-1-carboxylate (ACC) to ammonia and alpha-ketobutyrate. Allows growth on ACC as a nitrogen source. This chain is 1-aminocyclopropane-1-carboxylate deaminase, found in Paracidovorax citrulli (strain AAC00-1) (Acidovorax citrulli).